Here is a 203-residue protein sequence, read N- to C-terminus: Serine hydrolase-like protein (203 aa).

An AB hydrolase-1 domain is found at 33–145 (PPVLCLHGWL…FLLESDEMEN (113 aa)). S108 is an active-site residue.

This sequence belongs to the AB hydrolase superfamily.

In terms of biological role, putative serine hydrolase. The sequence is that of Serine hydrolase-like protein (SERHL) from Homo sapiens (Human).